A 148-amino-acid polypeptide reads, in one-letter code: UPF0756 membrane protein ETA_17460 (148 aa).

The next 4 helical transmembrane spans lie at 14–34 (ALSYFSHNITVTIALLVLIVI), 51–71 (MTVGIIILTIGVMAPIASGTI), 80–100 (FLHWKSLTAIAIGIFVSWLGG), and 112–132 (VVGGLLIGTIIGVSLFRGVPV).

The protein belongs to the UPF0756 family.

Its subcellular location is the cell membrane. This chain is UPF0756 membrane protein ETA_17460, found in Erwinia tasmaniensis (strain DSM 17950 / CFBP 7177 / CIP 109463 / NCPPB 4357 / Et1/99).